Here is a 125-residue protein sequence, read N- to C-terminus: Small ribosomal subunit protein uS12m (125 aa).

This sequence belongs to the universal ribosomal protein uS12 family.

Its subcellular location is the mitochondrion. Protein S12 is involved in the translation initiation step. The chain is Small ribosomal subunit protein uS12m (RPS12) from Allium cepa (Onion).